The primary structure comprises 95 residues: UPF0473 protein PEPE_1260 (95 aa).

The protein belongs to the UPF0473 family.

This chain is UPF0473 protein PEPE_1260, found in Pediococcus pentosaceus (strain ATCC 25745 / CCUG 21536 / LMG 10740 / 183-1w).